Here is a 93-residue protein sequence, read N- to C-terminus: Small ribosomal subunit protein uS19 (93 aa).

Belongs to the universal ribosomal protein uS19 family.

Protein S19 forms a complex with S13 that binds strongly to the 16S ribosomal RNA. The polypeptide is Small ribosomal subunit protein uS19 (Clostridium perfringens (strain ATCC 13124 / DSM 756 / JCM 1290 / NCIMB 6125 / NCTC 8237 / Type A)).